The following is a 1697-amino-acid chain: SAC3 family protein B (1697 aa).

Disordered regions lie at residues 54–134, 167–280, 306–413, and 491–512; these read PPAS…QPGG, QRPN…SRSN, EATR…EQAR, and ESERGERERKGDLDHYERVDGD. Over residues 120–134 the composition is skewed to low complexity; the sequence is QNPSPSSGQPYQPGG. A compositionally biased stretch (basic and acidic residues) spans 178–192; the sequence is DGSRNFLKDHGEHSR. Positions 193-202 are enriched in polar residues; it reads ATSPPATSHI. Residues 215-227 show a composition bias toward basic and acidic residues; the sequence is RSQDSKRKSRSDI. Polar residues-rich tracts occupy residues 233–243, 257–280, and 335–380; these read MGFSRRNQSPV, PLSSRTWMRSPSSAENNPVRSRSN, and RFST…SPAT. The PCI domain maps to 625–813; the sequence is NIEQMNKTSV…KCSKLVHMKK (189 aa).

The protein belongs to the SAC3 family. In terms of assembly, interacts with SAC3A, EER5 and CML19. Interacts with UCH1 and UCH2.

It is found in the nucleus. Functionally, component of the TREX-2 complex (transcription and export complex 2), a muliprotein complex that functions in docking export-competent ribonucleoprotein particles (mRNPs) to the nuclear entrance of the nuclear pore complex (nuclear basket). TREX-2 participates in mRNA export and accurate chromatin positioning in the nucleus by tethering genes to the nuclear periphery. The sequence is that of SAC3 family protein B from Arabidopsis thaliana (Mouse-ear cress).